We begin with the raw amino-acid sequence, 427 residues long: Acetylornithine aminotransferase (427 aa).

The disordered stretch occupies residues 1-23; that stretch reads MSLQTLIEQATNPPESGSAASSP. Pyridoxal 5'-phosphate is bound by residues 124–125 and phenylalanine 157; that span reads GA. Arginine 160 contributes to the N(2)-acetyl-L-ornithine binding site. 248–251 lines the pyridoxal 5'-phosphate pocket; sequence DEVQ. N6-(pyridoxal phosphate)lysine is present on lysine 277. Serine 304 is a binding site for N(2)-acetyl-L-ornithine. Threonine 305 is a binding site for pyridoxal 5'-phosphate.

The protein belongs to the class-III pyridoxal-phosphate-dependent aminotransferase family. ArgD subfamily. In terms of assembly, homodimer. Pyridoxal 5'-phosphate is required as a cofactor.

Its subcellular location is the cytoplasm. The catalysed reaction is N(2)-acetyl-L-ornithine + 2-oxoglutarate = N-acetyl-L-glutamate 5-semialdehyde + L-glutamate. Its pathway is amino-acid biosynthesis; L-arginine biosynthesis; N(2)-acetyl-L-ornithine from L-glutamate: step 4/4. This Nostoc sp. (strain PCC 7120 / SAG 25.82 / UTEX 2576) protein is Acetylornithine aminotransferase.